The primary structure comprises 759 residues: Protein YdeP (759 aa).

Residues Cys-49 and Cys-52 each coordinate [4Fe-4S] cluster.

This sequence belongs to the prokaryotic molybdopterin-containing oxidoreductase family. Requires [4Fe-4S] cluster as cofactor. Mo-bis(molybdopterin guanine dinucleotide) serves as cofactor.

In terms of biological role, probably involved in acid resistance. The chain is Protein YdeP (ydeP) from Escherichia coli (strain K12).